The primary structure comprises 230 residues: 5'-methylthioadenosine/S-adenosylhomocysteine nucleosidase (230 aa).

The Proton acceptor role is filled by Glu12. Residues Gly78, Ile153, and 174–175 (ME) each bind substrate. Residue Asp198 is the Proton donor of the active site.

The protein belongs to the PNP/UDP phosphorylase family. MtnN subfamily.

The enzyme catalyses S-adenosyl-L-homocysteine + H2O = S-(5-deoxy-D-ribos-5-yl)-L-homocysteine + adenine. It catalyses the reaction S-methyl-5'-thioadenosine + H2O = 5-(methylsulfanyl)-D-ribose + adenine. The catalysed reaction is 5'-deoxyadenosine + H2O = 5-deoxy-D-ribose + adenine. Its pathway is amino-acid biosynthesis; L-methionine biosynthesis via salvage pathway; S-methyl-5-thio-alpha-D-ribose 1-phosphate from S-methyl-5'-thioadenosine (hydrolase route): step 1/2. Its function is as follows. Catalyzes the irreversible cleavage of the glycosidic bond in both 5'-methylthioadenosine (MTA) and S-adenosylhomocysteine (SAH/AdoHcy) to adenine and the corresponding thioribose, 5'-methylthioribose and S-ribosylhomocysteine, respectively. Also cleaves 5'-deoxyadenosine, a toxic by-product of radical S-adenosylmethionine (SAM) enzymes, into 5-deoxyribose and adenine. The sequence is that of 5'-methylthioadenosine/S-adenosylhomocysteine nucleosidase from Shewanella sediminis (strain HAW-EB3).